The chain runs to 78 residues: Acyl carrier protein (78 aa).

Positions 2–77 (SDIAERVKKI…DAIKYIGENM (76 aa)) constitute a Carrier domain. Ser-37 is subject to O-(pantetheine 4'-phosphoryl)serine.

This sequence belongs to the acyl carrier protein (ACP) family. Post-translationally, 4'-phosphopantetheine is transferred from CoA to a specific serine of apo-ACP by AcpS. This modification is essential for activity because fatty acids are bound in thioester linkage to the sulfhydryl of the prosthetic group.

It localises to the cytoplasm. The protein operates within lipid metabolism; fatty acid biosynthesis. Its function is as follows. Carrier of the growing fatty acid chain in fatty acid biosynthesis. The polypeptide is Acyl carrier protein (Magnetococcus marinus (strain ATCC BAA-1437 / JCM 17883 / MC-1)).